Here is a 165-residue protein sequence, read N- to C-terminus: Small ribosomal subunit protein uS17c (165 aa).

The transit peptide at 1–57 directs the protein to the chloroplast; that stretch reads MSLSFSLLKPPLSSSNPNPFLHGTTTKLSLLPSFSALSLSSSPPSSSTTYTFPVIKA. The disordered stretch occupies residues 128–165; that stretch reads AVAPEGRQSSATRPKPIQAASDELGIPLESQVEGDKTV.

In terms of assembly, component of the chloroplast small ribosomal subunit (SSU). Mature 70S chloroplast ribosomes of higher plants consist of a small (30S) and a large (50S) subunit. The 30S small subunit contains 1 molecule of ribosomal RNA (16S rRNA) and 24 different proteins. The 50S large subunit contains 3 rRNA molecules (23S, 5S and 4.5S rRNA) and 33 different proteins.

The protein localises to the plastid. It localises to the chloroplast. Its function is as follows. Component of the chloroplast ribosome (chloro-ribosome), a dedicated translation machinery responsible for the synthesis of chloroplast genome-encoded proteins, including proteins of the transcription and translation machinery and components of the photosynthetic apparatus. This is Small ribosomal subunit protein uS17c (RPS17) from Spinacia oleracea (Spinach).